The sequence spans 237 residues: Sugar fermentation stimulation protein homolog (237 aa).

The protein belongs to the SfsA family.

In Thioalkalivibrio sulfidiphilus (strain HL-EbGR7), this protein is Sugar fermentation stimulation protein homolog.